The following is a 369-amino-acid chain: Glutamine synthetase 2 cytoplasmic (369 aa).

One can recognise a GS beta-grasp domain in the interval 32 to 112 (VQATYVWIDG…VMCDTYKFDG (81 aa)). One can recognise a GS catalytic domain in the interval 119–369 (KRKTCLEVAN…AILRTICLDE (251 aa)).

This sequence belongs to the glutamine synthetase family. In terms of assembly, homooctamer.

The protein localises to the cytoplasm. The catalysed reaction is L-glutamate + NH4(+) + ATP = L-glutamine + ADP + phosphate + H(+). This Drosophila melanogaster (Fruit fly) protein is Glutamine synthetase 2 cytoplasmic (Gs2).